Consider the following 127-residue polypeptide: Holo-[acyl-carrier-protein] synthase (127 aa).

Mg(2+) contacts are provided by Asp7 and Glu56.

This sequence belongs to the P-Pant transferase superfamily. AcpS family. Requires Mg(2+) as cofactor.

Its subcellular location is the cytoplasm. It carries out the reaction apo-[ACP] + CoA = holo-[ACP] + adenosine 3',5'-bisphosphate + H(+). Transfers the 4'-phosphopantetheine moiety from coenzyme A to a Ser of acyl-carrier-protein. The protein is Holo-[acyl-carrier-protein] synthase of Leptospira biflexa serovar Patoc (strain Patoc 1 / Ames).